A 361-amino-acid chain; its full sequence is Phospho-N-acetylmuramoyl-pentapeptide-transferase (361 aa).

11 consecutive transmembrane segments (helical) span residues 10 to 30 (PGTGLQWSLGLIALILAACLI), 40 to 60 (LSLPLLLAGALSWLVCWIGVP), 84 to 104 (GTPTMGGLLLVPCGVVVGSLV), 107 to 127 (GDPRLLPIGLVTLAFMVIGGI), 147 to 167 (LLLQALAAGLFLLWAGLHGAI), 175 to 195 (WGWLLPIGLLIWPLGLFVFLA), 206 to 226 (LDGLAAGVGAIVLVGLSLQLM), 232 to 252 (GDPALAGYGAALAGAWLGFLL), 260 to 280 (VFMGDTGSLAMGAALSAIALL), 288 to 308 (LLMGGLLLAESLSVILQVWVF), and 341 to 361 (VVVSFWGISLLLVALGLVLVP).

It belongs to the glycosyltransferase 4 family. MraY subfamily. It depends on Mg(2+) as a cofactor.

It localises to the cell inner membrane. It carries out the reaction UDP-N-acetyl-alpha-D-muramoyl-L-alanyl-gamma-D-glutamyl-meso-2,6-diaminopimeloyl-D-alanyl-D-alanine + di-trans,octa-cis-undecaprenyl phosphate = di-trans,octa-cis-undecaprenyl diphospho-N-acetyl-alpha-D-muramoyl-L-alanyl-D-glutamyl-meso-2,6-diaminopimeloyl-D-alanyl-D-alanine + UMP. Its pathway is cell wall biogenesis; peptidoglycan biosynthesis. Functionally, catalyzes the initial step of the lipid cycle reactions in the biosynthesis of the cell wall peptidoglycan: transfers peptidoglycan precursor phospho-MurNAc-pentapeptide from UDP-MurNAc-pentapeptide onto the lipid carrier undecaprenyl phosphate, yielding undecaprenyl-pyrophosphoryl-MurNAc-pentapeptide, known as lipid I. This chain is Phospho-N-acetylmuramoyl-pentapeptide-transferase, found in Synechococcus sp. (strain RCC307).